Consider the following 315-residue polypeptide: Type II restriction enzyme SalI (315 aa).

It carries out the reaction Endonucleolytic cleavage of DNA to give specific double-stranded fragments with terminal 5'-phosphates.. In terms of biological role, a P subtype restriction enzyme that recognizes the double-stranded sequence 5'-GTCGAC-3' and cleaves after G-1. This is Type II restriction enzyme SalI from Streptomyces albus G.